The chain runs to 321 residues: Lipoyl synthase (321 aa).

Residues Cys-68, Cys-73, Cys-79, Cys-94, Cys-98, Cys-101, and Ser-308 each contribute to the [4Fe-4S] cluster site. In terms of domain architecture, Radical SAM core spans 80–297; the sequence is FNHGTATFMI…KEQALAMGFT (218 aa).

It belongs to the radical SAM superfamily. Lipoyl synthase family. [4Fe-4S] cluster serves as cofactor.

The protein resides in the cytoplasm. It carries out the reaction [[Fe-S] cluster scaffold protein carrying a second [4Fe-4S](2+) cluster] + N(6)-octanoyl-L-lysyl-[protein] + 2 oxidized [2Fe-2S]-[ferredoxin] + 2 S-adenosyl-L-methionine + 4 H(+) = [[Fe-S] cluster scaffold protein] + N(6)-[(R)-dihydrolipoyl]-L-lysyl-[protein] + 4 Fe(3+) + 2 hydrogen sulfide + 2 5'-deoxyadenosine + 2 L-methionine + 2 reduced [2Fe-2S]-[ferredoxin]. It participates in protein modification; protein lipoylation via endogenous pathway; protein N(6)-(lipoyl)lysine from octanoyl-[acyl-carrier-protein]: step 2/2. Functionally, catalyzes the radical-mediated insertion of two sulfur atoms into the C-6 and C-8 positions of the octanoyl moiety bound to the lipoyl domains of lipoate-dependent enzymes, thereby converting the octanoylated domains into lipoylated derivatives. This chain is Lipoyl synthase, found in Proteus mirabilis (strain HI4320).